Reading from the N-terminus, the 742-residue chain is MALPVEEWRRSAARCWAALEPALRERLAAAPLGEALRMGCGLFGPEEAALQRLCRRARTGKEPAAARFYREEGNRQFGRCCYRDAVRLYSQAAAHEPPRSPEVALCFANRSAALFHLGHFEVCLEDIARAESHGYPDRLLPKVLLRKAECLLRLGRLQDATDTLTAVENKMAVDGIMTSPIHRMLLKKLSQLKTEIHEGSCPEPAREADGDVQRESEIWEENGSISGASSSLSLNFSTERGRHLVASQDILPGQNLLKEKAFVSVLCPGEGDSLLLQDSSETVWDTRVTNADLYCHHCLKQLLASIPCCGCSYAKYCSQNCADVAWEQYHRTECPLGALLLTLGVFFHVALRTVLLAGFSEVSRLVEWSRDDSNKDLCNAEAGGEHPSEALDTRAGRKVIPGCNDNGQYQSSYQAVFNLLPHVEKHSPEHKFLCMLSIVAICKKLQETGLEAAVLNGESSTTGSEQKTCGKTSDELSPELMIMAEAMLRHVLQLQCNAQAITVMQELESGDGAVVNKKPVRLATAFFPVLSLLNHSCSPNISVSFSGTAATVRASQPIPSGQEIFHCYGEEMLCCSSEACAFSVSRERLSQRLLDLQQQMEKALELLRDSKADEAIKMLLKCQIDARNFLSPEHLLMGELEDHLAQVYATLGKWQEAARHLGRSIQLVEMHHGPSSVEMGHELFKLAQILFNGFAVSEALSTIQRAEEILSVHCGPQSTQIQELQEMKTCLLELPRSILQRT.

110–112 lines the S-adenosyl-L-methionine pocket; that stretch reads RSA. The SET domain occupies 230–569; that stretch reads SSLSLNFSTE…SGQEIFHCYG (340 aa). Residues C295, C298, C308, C311, C317, C321, H330, and C334 each coordinate Zn(2+). An MYND-type zinc finger spans residues 295-334; it reads CHHCLKQLLASIPCCGCSYAKYCSQNCADVAWEQYHRTEC. S-adenosyl-L-methionine-binding positions include N418, 534–535, and Y568; that span reads NH.

Belongs to the class V-like SAM-binding methyltransferase superfamily.

It localises to the nucleus. It is found in the cytoplasm. The enzyme catalyses L-lysyl-[protein] + S-adenosyl-L-methionine = N(6)-methyl-L-lysyl-[protein] + S-adenosyl-L-homocysteine + H(+). Functionally, protein-lysine N-methyltransferase. Monomethylates PRMT5, modulating its transcriptional activity. May also act as a histone methyltransferase. Plays a critical role in cardiac development. Acts as a key epigenetic regulator of gene expression during cardiac development via its dual activities as a methyltransferase and negative regulator of HDAC1. The protein is Protein-lysine N-methyltransferase SMYD4 (SMYD4) of Gallus gallus (Chicken).